Consider the following 269-residue polypeptide: uncharacterized protein (269 aa).

Residues 1-12 show a composition bias toward basic residues; the sequence is MSKRTNNKKRKH. Positions 1–82 are disordered; that stretch reads MSKRTNNKKR…KKKENGNENV (82 aa). Over residues 21-33 the composition is skewed to acidic residues; it reads PENQDENQDEEFL. Basic and acidic residues predominate over residues 34 to 63; it reads EDKNKDKNQNKNKDKNKNKDMNKNKNKDMN.

This is an uncharacterized protein from Dictyostelium discoideum (Social amoeba).